The chain runs to 421 residues: Ribulose bisphosphate carboxylase large chain (421 aa).

Positions 68 and 118 each coordinate substrate. The active-site Proton acceptor is the Lys120. Lys122 is a substrate binding site. Mg(2+) contacts are provided by Lys146, Asp148, and Glu149. An N6-carboxylysine modification is found at Lys146. The active-site Proton acceptor is His239. Residues Arg240, His272, and Ser324 each contribute to the substrate site.

Belongs to the RuBisCO large chain family. Type I subfamily. In terms of assembly, heterohexadecamer of 8 large chains and 8 small chains; disulfide-linked. The disulfide link is formed within the large subunit homodimers. Requires Mg(2+) as cofactor. The disulfide bond which can form in the large chain dimeric partners within the hexadecamer appears to be associated with oxidative stress and protein turnover.

It localises to the plastid. It is found in the chloroplast. It carries out the reaction 2 (2R)-3-phosphoglycerate + 2 H(+) = D-ribulose 1,5-bisphosphate + CO2 + H2O. The enzyme catalyses D-ribulose 1,5-bisphosphate + O2 = 2-phosphoglycolate + (2R)-3-phosphoglycerate + 2 H(+). Functionally, ruBisCO catalyzes two reactions: the carboxylation of D-ribulose 1,5-bisphosphate, the primary event in carbon dioxide fixation, as well as the oxidative fragmentation of the pentose substrate in the photorespiration process. Both reactions occur simultaneously and in competition at the same active site. The protein is Ribulose bisphosphate carboxylase large chain (rbcL) of Aegilops crassa (Persian goatgrass).